Here is a 460-residue protein sequence, read N- to C-terminus: Receptor-like cytosolic serine/threonine-protein kinase RBK2 (460 aa).

Residues 1-67 (MNSASAHDLR…DADTDVQCKN (67 aa)) are disordered. The segment covering 7–23 (HDLRLLEVDKEKQDPKS) has biased composition (basic and acidic residues). One can recognise a Protein kinase domain in the interval 143–415 (FSPENIIGRG…VELLLGHEDV (273 aa)). ATP contacts are provided by residues 149–157 (IGRGGYADV) and K171. D267 (proton acceptor) is an active-site residue. T307 bears the Phosphothreonine mark. Y315 carries the post-translational modification Phosphotyrosine.

Belongs to the protein kinase superfamily. Ser/Thr protein kinase family. In terms of assembly, interacts with ARAC5 and ARAC10.

Its subcellular location is the cytoplasm. It catalyses the reaction L-seryl-[protein] + ATP = O-phospho-L-seryl-[protein] + ADP + H(+). The catalysed reaction is L-threonyl-[protein] + ATP = O-phospho-L-threonyl-[protein] + ADP + H(+). This Arabidopsis thaliana (Mouse-ear cress) protein is Receptor-like cytosolic serine/threonine-protein kinase RBK2 (RBK2).